A 538-amino-acid chain; its full sequence is Atos homolog protein B (538 aa).

2 stretches are compositionally biased toward polar residues: residues 1 to 12 (MRHVQAETSPSS) and 129 to 141 (GGSS…SGAR). Disordered regions lie at residues 1 to 98 (MRHV…EPPT), 129 to 185 (GGSS…QLHT), and 201 to 303 (LVSG…PTDC). Residues 227–238 (HTPPGPGPPGPC) show a composition bias toward pro residues. Residues S254 and S255 each carry the phosphoserine modification. The tract at residues 348-430 (LLGNFEESLL…VPKVGTIQVT (83 aa)) is required for macropage invasion. Residues 436-444 (QTVVKMFLV) form a transactivation domain 1 (TAD1) region.

The protein belongs to the ATOS family.

The protein resides in the nucleus. In terms of biological role, transcription regulator that may syncronize transcriptional and translational programs. The chain is Atos homolog protein B from Bos taurus (Bovine).